The chain runs to 50 residues: Small ribosomal subunit protein uS14 (50 aa).

4 residues coordinate Zn(2+): Cys-15, Cys-18, Cys-33, and Cys-36.

The protein belongs to the universal ribosomal protein uS14 family. Zinc-binding uS14 subfamily. As to quaternary structure, part of the 30S ribosomal subunit. Zn(2+) is required as a cofactor.

Binds 16S rRNA, required for the assembly of 30S particles. The protein is Small ribosomal subunit protein uS14 of Methanosarcina barkeri (strain Fusaro / DSM 804).